Consider the following 311-residue polypeptide: tRNA-cytidine(32) 2-sulfurtransferase (311 aa).

A PP-loop motif motif is present at residues 47–52; it reads SGGKDS. Positions 122, 125, and 213 each coordinate [4Fe-4S] cluster.

The protein belongs to the TtcA family. In terms of assembly, homodimer. Requires Mg(2+) as cofactor. The cofactor is [4Fe-4S] cluster.

The protein resides in the cytoplasm. It carries out the reaction cytidine(32) in tRNA + S-sulfanyl-L-cysteinyl-[cysteine desulfurase] + AH2 + ATP = 2-thiocytidine(32) in tRNA + L-cysteinyl-[cysteine desulfurase] + A + AMP + diphosphate + H(+). The protein operates within tRNA modification. Catalyzes the ATP-dependent 2-thiolation of cytidine in position 32 of tRNA, to form 2-thiocytidine (s(2)C32). The sulfur atoms are provided by the cysteine/cysteine desulfurase (IscS) system. The chain is tRNA-cytidine(32) 2-sulfurtransferase from Salmonella arizonae (strain ATCC BAA-731 / CDC346-86 / RSK2980).